The following is a 113-amino-acid chain: N(2)-fixation sustaining protein CowN (113 aa).

The protein belongs to the CowN family.

Its function is as follows. Is required to sustain N(2)-dependent growth in the presence of low levels of carbon monoxide (CO). Probably acts by protecting the N(2) fixation ability of the nitrogenase complex, which is inactivated in the presence of CO. This is N(2)-fixation sustaining protein CowN from Azoarcus sp. (strain BH72).